Here is a 181-residue protein sequence, read N- to C-terminus: Oligoribonuclease (181 aa).

One can recognise an Exonuclease domain in the interval 8 to 171 (LIWIDLEMTG…DDIRESVAEL (164 aa)). Residue Y129 is part of the active site.

Belongs to the oligoribonuclease family.

It localises to the cytoplasm. 3'-to-5' exoribonuclease specific for small oligoribonucleotides. This Klebsiella pneumoniae subsp. pneumoniae (strain ATCC 700721 / MGH 78578) protein is Oligoribonuclease.